A 419-amino-acid polypeptide reads, in one-letter code: uncharacterized protein (419 aa).

This is an uncharacterized protein from Caenorhabditis elegans.